Reading from the N-terminus, the 487-residue chain is L-tartrate/succinate antiporter (487 aa).

Helical transmembrane passes span 10–30 (YLAP…AGLE), 33–53 (TWLY…EPVP), 54–74 (GAVV…WLLF), 93–113 (WAVS…FMFG), 137–157 (TLFL…VTPS), 189–209 (IGSY…AIFL), 236–256 (FLGM…LAYV), 292–312 (LMVG…AAMV), 313–333 (GYSV…DIVS), 340–360 (VFFW…TGFI), 370–390 (SLSG…FYLL), 393–413 (FFAS…AAAL), 418–438 (IPLP…SILT), and 465–485 (IFGL…MPVV).

Belongs to the SLC13A/DASS transporter (TC 2.A.47) family. DIT1 subfamily.

The protein resides in the cell inner membrane. It carries out the reaction (2R,3R)-tartrate(out) + succinate(in) = (2R,3R)-tartrate(in) + succinate(out). Functionally, catalyzes the uptake of tartrate in exchange for intracellular succinate. Essential for anaerobic L-tartrate fermentation. This is L-tartrate/succinate antiporter (ttdT) from Escherichia coli O6:K15:H31 (strain 536 / UPEC).